The following is a 1650-amino-acid chain: Phosphatidylinositol 3,4,5-trisphosphate-dependent Rac exchanger 1 protein (1650 aa).

Residues 1-19 show a composition bias toward gly residues; that stretch reads MEAPGSGGGDGGGDPGGDG. The interval 1-33 is disordered; the sequence is MEAPGSGGGDGGGDPGGDGAHPDARGPVSGPCA. One can recognise a DH domain in the interval 44-235; the sequence is LRLCVLNEIL…KTVCSNINET (192 aa). Residues 266 to 387 form the PH domain; the sequence is ELLLQGNLLK…WLDALIRERE (122 aa). The residue at position 314 (S314) is a Phosphoserine. 2 consecutive DEP domains span residues 416–491 and 518–592; these read MSKK…RFRY and SLYA…RFHA. The PDZ domain maps to 620–698; that stretch reads RLLIPPQEDD…SRRPLRLLVA (79 aa). The tract at residues 793 to 813 is disordered; it reads ARASQGAPDEDPQEDDQPDSA. The span at 800–810 shows a compositional bias: acidic residues; the sequence is PDEDPQEDDQP. S991 carries the phosphoserine modification. Disordered stretches follow at residues 1022-1047 and 1099-1129; these read SPAV…GAPS and PTSA…EVDR. Residues 1030 to 1047 are compositionally biased toward polar residues; the sequence is QGQGLNDSSYGSASGAPS. The span at 1109–1122 shows a compositional bias: low complexity; sequence PSLVEETSSSPPVS. Phosphoserine occurs at positions 1186 and 1191.

Interacts preferentially with RAC2. Interacts with RAC1. Interacts with AUTS2.

Its subcellular location is the cytoplasm. The protein localises to the cytosol. The protein resides in the cell membrane. Its function is as follows. Functions as a RAC guanine nucleotide exchange factor (GEF), which activates the Rac proteins by exchanging bound GDP for free GTP. Its activity is synergistically activated by phosphatidylinositol 3,4,5-trisphosphate and the beta gamma subunits of heterotrimeric G protein. May function downstream of heterotrimeric G proteins in neutrophils. The chain is Phosphatidylinositol 3,4,5-trisphosphate-dependent Rac exchanger 1 protein (Prex1) from Mus musculus (Mouse).